Here is a 348-residue protein sequence, read N- to C-terminus: Adenosine deaminase (348 aa).

Zn(2+)-binding residues include histidine 16 and histidine 18. The substrate site is built by histidine 18, aspartate 20, and glycine 174. Position 201 (histidine 201) interacts with Zn(2+). Glutamate 204 functions as the Proton donor in the catalytic mechanism. A Zn(2+)-binding site is contributed by aspartate 282.

The protein belongs to the metallo-dependent hydrolases superfamily. Adenosine and AMP deaminases family. Adenosine deaminase subfamily. It depends on Zn(2+) as a cofactor.

It carries out the reaction adenosine + H2O + H(+) = inosine + NH4(+). The catalysed reaction is 2'-deoxyadenosine + H2O + H(+) = 2'-deoxyinosine + NH4(+). Its function is as follows. Catalyzes the hydrolytic deamination of adenosine and 2-deoxyadenosine. The chain is Adenosine deaminase from Clostridium kluyveri (strain ATCC 8527 / DSM 555 / NBRC 12016 / NCIMB 10680 / K1).